A 120-amino-acid polypeptide reads, in one-letter code: MGYTIQLDKDGDYYWDEDPTHHDPYMRANATSHAAASHAAASHAAASHAAAPHTAVHHAFHEPFIKLNLTDKNIFNGLGFILIVIFIYLLIITLQQMLTRHIYNTVQQCVKTHLDSKNLQ.

N-linked (GlcNAc...) asparagine; by host glycosylation is found at asparagine 29 and asparagine 68. A helical membrane pass occupies residues isoleucine 74 to leucine 94.

It belongs to the asfivirus B117L family.

The protein resides in the host membrane. Its subcellular location is the virion. This is an uncharacterized protein from Ornithodoros (relapsing fever ticks).